The following is a 94-amino-acid chain: Pyrimidine/purine nucleoside phosphorylase (94 aa).

It belongs to the nucleoside phosphorylase PpnP family.

The enzyme catalyses a purine D-ribonucleoside + phosphate = a purine nucleobase + alpha-D-ribose 1-phosphate. It carries out the reaction adenosine + phosphate = alpha-D-ribose 1-phosphate + adenine. The catalysed reaction is cytidine + phosphate = cytosine + alpha-D-ribose 1-phosphate. It catalyses the reaction guanosine + phosphate = alpha-D-ribose 1-phosphate + guanine. The enzyme catalyses inosine + phosphate = alpha-D-ribose 1-phosphate + hypoxanthine. It carries out the reaction thymidine + phosphate = 2-deoxy-alpha-D-ribose 1-phosphate + thymine. The catalysed reaction is uridine + phosphate = alpha-D-ribose 1-phosphate + uracil. It catalyses the reaction xanthosine + phosphate = alpha-D-ribose 1-phosphate + xanthine. Its function is as follows. Catalyzes the phosphorolysis of diverse nucleosides, yielding D-ribose 1-phosphate and the respective free bases. Can use uridine, adenosine, guanosine, cytidine, thymidine, inosine and xanthosine as substrates. Also catalyzes the reverse reactions. The chain is Pyrimidine/purine nucleoside phosphorylase from Salmonella heidelberg (strain SL476).